The following is a 681-amino-acid chain: Methionine--tRNA ligase (681 aa).

Positions 18 to 28 (PYANGSIHLGH) match the 'HIGH' region motif. Zn(2+) contacts are provided by C149, C152, C162, and C165. The 'KMSKS' region signature appears at 334–338 (KMSKS). K337 serves as a coordination point for ATP. Residues 580–681 (DFAKLDLRIV…NGAEPGQRVS (102 aa)) form the tRNA-binding domain.

The protein belongs to the class-I aminoacyl-tRNA synthetase family. MetG type 1 subfamily. Homodimer. Requires Zn(2+) as cofactor.

It localises to the cytoplasm. The catalysed reaction is tRNA(Met) + L-methionine + ATP = L-methionyl-tRNA(Met) + AMP + diphosphate. Functionally, is required not only for elongation of protein synthesis but also for the initiation of all mRNA translation through initiator tRNA(fMet) aminoacylation. The polypeptide is Methionine--tRNA ligase (Chromohalobacter salexigens (strain ATCC BAA-138 / DSM 3043 / CIP 106854 / NCIMB 13768 / 1H11)).